Reading from the N-terminus, the 415-residue chain is Putative FNIP repeat-containing protein L415 (415 aa).

Residues 148–185 (FIKKGAIPDSVTHLYFGSDYLSKDIIPKNVVYLRFGDF) form an FNIP repeat.

In Acanthamoeba polyphaga mimivirus (APMV), this protein is Putative FNIP repeat-containing protein L415.